A 378-amino-acid chain; its full sequence is GDP-mannose 3,5-epimerase 1 (378 aa).

NAD(+)-binding positions include 36-62 (GAGGFIGSHIARRLKSEGHYIIASDWK), Asp60, and Asp80. Substrate contacts are provided by residues Gly105 and 145-147 (SAC). Residues Tyr175 and Lys179 each contribute to the NAD(+) site. Catalysis depends on Tyr175, which acts as the Proton acceptor. Residues Asn204, 217-219 (EKA), Lys226, 242-244 (QTR), Arg307, and Ser357 each bind substrate.

This sequence belongs to the NAD(P)-dependent epimerase/dehydratase family. In terms of assembly, homodimer. Requires NAD(+) as cofactor.

It catalyses the reaction GDP-alpha-D-mannose = GDP-beta-L-gulose. The enzyme catalyses GDP-beta-L-gulose = GDP-beta-L-galactose. It participates in cofactor biosynthesis; L-ascorbate biosynthesis via GDP-alpha-D-mannose pathway; L-ascorbate from GDP-alpha-D-mannose: step 1/5. Catalyzes a reversible epimerization of GDP-D-mannose that precedes the committed step in the biosynthesis of vitamin C (L-ascorbate), resulting in the hydrolysis of the highly energetic glycosyl-pyrophosphoryl linkage. Able to catalyze 2 distinct epimerization reactions and can release both GDP-L-galactose and GDP-L-gulose from GDP-mannose. The chain is GDP-mannose 3,5-epimerase 1 from Oryza sativa subsp. indica (Rice).